Consider the following 640-residue polypeptide: Chaperone protein DnaK (640 aa).

A Phosphothreonine; by autocatalysis modification is found at T199. The interval 603-640 (YTQQAEEPQPQKEEGKAAEEDVVDAEFEEVKEDKNKAS) is disordered. Basic and acidic residues predominate over residues 611-621 (QPQKEEGKAAE). Residues 622-632 (EDVVDAEFEEV) are compositionally biased toward acidic residues.

The protein belongs to the heat shock protein 70 family.

In terms of biological role, acts as a chaperone. The polypeptide is Chaperone protein DnaK (Nitrosococcus oceani (strain ATCC 19707 / BCRC 17464 / JCM 30415 / NCIMB 11848 / C-107)).